A 90-amino-acid polypeptide reads, in one-letter code: Small ribosomal subunit protein bS16 (90 aa).

The protein belongs to the bacterial ribosomal protein bS16 family.

In Geobacillus sp. (strain WCH70), this protein is Small ribosomal subunit protein bS16.